The following is a 474-amino-acid chain: tRNA-2-methylthio-N(6)-dimethylallyladenosine synthase (474 aa).

The 118-residue stretch at 3–120 (KKLYIKTFGC…LPQMISTRQI (118 aa)) folds into the MTTase N-terminal domain. [4Fe-4S] cluster-binding residues include Cys12, Cys49, Cys83, Cys157, Cys161, and Cys164. In terms of domain architecture, Radical SAM core spans 143-382 (RTEGVTAFVS…ELQAQAISVR (240 aa)). One can recognise a TRAM domain in the interval 381–444 (VRMVGTTQRV…SHTLRGENVR (64 aa)).

This sequence belongs to the methylthiotransferase family. MiaB subfamily. In terms of assembly, monomer. [4Fe-4S] cluster serves as cofactor.

Its subcellular location is the cytoplasm. The enzyme catalyses N(6)-dimethylallyladenosine(37) in tRNA + (sulfur carrier)-SH + AH2 + 2 S-adenosyl-L-methionine = 2-methylsulfanyl-N(6)-dimethylallyladenosine(37) in tRNA + (sulfur carrier)-H + 5'-deoxyadenosine + L-methionine + A + S-adenosyl-L-homocysteine + 2 H(+). In terms of biological role, catalyzes the methylthiolation of N6-(dimethylallyl)adenosine (i(6)A), leading to the formation of 2-methylthio-N6-(dimethylallyl)adenosine (ms(2)i(6)A) at position 37 in tRNAs that read codons beginning with uridine. The polypeptide is tRNA-2-methylthio-N(6)-dimethylallyladenosine synthase (Nitrosospira multiformis (strain ATCC 25196 / NCIMB 11849 / C 71)).